The following is a 301-amino-acid chain: Protein FAM221A (301 aa).

A disordered region spans residues 235 to 271; that stretch reads MHAPSTSSPQPLAGGNEVGPSTQLSSLRKPEEDDMAY.

This sequence belongs to the FAM221 family.

This chain is Protein FAM221A (Fam221a), found in Mus musculus (Mouse).